The chain runs to 138 residues: PilB-specific inhibitory protein CpiA (138 aa).

In terms of assembly, interacts with PilB but not with TfpB.

Acts as a PilB inhibitor to control natural transformation. Inhibits type IV pili (T4P) extension by specifically binding and inhibiting the pilus extension ATPase PilB but not TfpB. This activity probably modulates T4P extension under different environmental conditions. This Acinetobacter baylyi (strain ATCC 33305 / BD413 / ADP1) protein is PilB-specific inhibitory protein CpiA.